The following is a 451-amino-acid chain: Porin AaxA (451 aa).

Positions Met-1–Gly-27 are cleaved as a signal peptide.

This sequence belongs to the OprB family.

It localises to the cell outer membrane. Facilitates L-arginine uptake, as part of the AaxABC system. The arginine uptake by the bacterium in the macrophage may be a virulence factor against the host innate immune response. This Chlamydia caviae (strain ATCC VR-813 / DSM 19441 / 03DC25 / GPIC) (Chlamydophila caviae) protein is Porin AaxA (aaxA).